The following is a 923-amino-acid chain: Mitochondrial 10-formyltetrahydrofolate dehydrogenase (923 aa).

The N-terminal 19 residues, 1–19 (MLWRGSQALRHFSTSRVYF), are a transit peptide targeting the mitochondrion; not cleaved. Residues 23–331 (LKLALIGQSL…PASQYFSAGE (309 aa)) are hydrolase domain. Residue serine 31 is modified to Phosphoserine. Lysine 60 bears the N6-succinyllysine mark. 110 to 112 (QFI) serves as a coordination point for (6R)-10-formyltetrahydrofolate. The active-site Proton donor is histidine 128. Aspartate 164 contributes to the (6R)-10-formyltetrahydrofolate binding site. Positions 339-416 (AEELKVAETI…DFIQKVVRRL (78 aa)) constitute a Carrier domain. Serine 375 carries the O-(pantetheine 4'-phosphoryl)serine modification. The interval 438-923 (TVKIPYQCFI…LKIKTVTLEY (486 aa)) is aldehyde dehydrogenase domain. NADP(+) is bound by residues 592 to 594 (IPW) and 618 to 621 (KPAQ). Serine 650 carries the phosphoserine modification. NADP(+) is bound by residues 651-656 (GGVAGQ) and 671-672 (GS). Lysine 681 carries the N6-succinyllysine modification. Residue glutamate 694 is the Proton acceptor of the active site. Residue 694–695 (EL) participates in NADP(+) binding. The Proton donor role is filled by cysteine 728. NADP(+) contacts are provided by residues lysine 778 and 825–827 (ESF). Position 903 is an N6-acetyllysine (lysine 903).

The protein in the N-terminal section; belongs to the GART family. In the C-terminal section; belongs to the aldehyde dehydrogenase family. ALDH1L subfamily. Phosphopantetheinylation at Ser-375 by AASDHPPT is required for the formyltetrahydrofolate dehydrogenase activity.

It localises to the mitochondrion. The catalysed reaction is (6R)-10-formyltetrahydrofolate + NADP(+) + H2O = (6S)-5,6,7,8-tetrahydrofolate + CO2 + NADPH + H(+). Mitochondrial 10-formyltetrahydrofolate dehydrogenase that catalyzes the NADP(+)-dependent conversion of 10-formyltetrahydrofolate to tetrahydrofolate and carbon dioxide. The protein is Mitochondrial 10-formyltetrahydrofolate dehydrogenase of Mus musculus (Mouse).